The chain runs to 397 residues: Dual specificity mitogen-activated protein kinase kinase 2 (397 aa).

The segment at 1-21 (MAPKRRPVPLIIAPTGEGQST) is disordered. The Protein kinase domain maps to 69-366 (FDPICELGAG…LKMLMGHTFI (298 aa)). ATP contacts are provided by residues 75–83 (LGAGNGGVV) and Lys-98. Asp-191 serves as the catalytic Proton acceptor. Phosphoserine; by RAF is present on residues Ser-219 and Ser-223. Residues 284–306 (GGAEGHSMSPRQRPPGRPVSGHG) form a disordered region.

This sequence belongs to the protein kinase superfamily. STE Ser/Thr protein kinase family. MAP kinase kinase subfamily. Phosphorylation on Ser/Thr by MAP kinase kinase kinases (RAF) positively regulates the kinase activity.

The enzyme catalyses L-seryl-[protein] + ATP = O-phospho-L-seryl-[protein] + ADP + H(+). It carries out the reaction L-threonyl-[protein] + ATP = O-phospho-L-threonyl-[protein] + ADP + H(+). The catalysed reaction is L-tyrosyl-[protein] + ATP = O-phospho-L-tyrosyl-[protein] + ADP + H(+). In terms of biological role, catalyzes the concomitant phosphorylation of a threonine and a tyrosine residue in a Thr-Glu-Tyr sequence located in MAP kinases. The sequence is that of Dual specificity mitogen-activated protein kinase kinase 2 (map2k2) from Cyprinus carpio (Common carp).